Reading from the N-terminus, the 174-residue chain is Co-chaperone protein HscB (174 aa).

Residues 2–74 (NYFALFDLPR…LNRAIYFLCL (73 aa)) enclose the J domain.

The protein belongs to the HscB family. As to quaternary structure, interacts with HscA and stimulates its ATPase activity. Interacts with IscU.

Functionally, co-chaperone involved in the maturation of iron-sulfur cluster-containing proteins. Seems to help targeting proteins to be folded toward HscA. The polypeptide is Co-chaperone protein HscB (Buchnera aphidicola subsp. Acyrthosiphon pisum (strain 5A)).